Reading from the N-terminus, the 216-residue chain is Adenylate kinase (216 aa).

10-15 serves as a coordination point for ATP; the sequence is GAGKGT. Residues 30 to 59 form an NMP region; the sequence is STGDMLRAAVKAGTPLGLELKKVMDAGQLV. Residues threonine 31, arginine 36, 57-59, 85-88, and glutamine 92 each bind AMP; these read QLV and GFPR. Residues 122–159 are LID; the sequence is GRRVHLASGRTYHIQYNPPKVEGKDDVTGEDLIQRDDD. ATP contacts are provided by residues arginine 123 and 132–133; that span reads TY. Residues arginine 156 and arginine 167 each contribute to the AMP site. ATP is bound at residue glycine 202.

This sequence belongs to the adenylate kinase family. Monomer.

It is found in the cytoplasm. It catalyses the reaction AMP + ATP = 2 ADP. It functions in the pathway purine metabolism; AMP biosynthesis via salvage pathway; AMP from ADP: step 1/1. Catalyzes the reversible transfer of the terminal phosphate group between ATP and AMP. Plays an important role in cellular energy homeostasis and in adenine nucleotide metabolism. The protein is Adenylate kinase of Pseudomonas putida (strain GB-1).